A 328-amino-acid chain; its full sequence is 5,10-methylenetetrahydromethanopterin reductase (328 aa).

The protein belongs to the mer family.

It localises to the cytoplasm. The enzyme catalyses 5-methyl-5,6,7,8-tetrahydromethanopterin + oxidized coenzyme F420-(gamma-L-Glu)(n) + H(+) = 5,10-methylenetetrahydromethanopterin + reduced coenzyme F420-(gamma-L-Glu)(n). It participates in one-carbon metabolism; methanogenesis from CO(2); methyl-coenzyme M from 5,10-methylene-5,6,7,8-tetrahydromethanopterin: step 1/2. Catalyzes the reversible reduction of methylene-H(4)MPT to methyl-H(4)MPT. This chain is 5,10-methylenetetrahydromethanopterin reductase, found in Methanosarcina acetivorans (strain ATCC 35395 / DSM 2834 / JCM 12185 / C2A).